A 191-amino-acid polypeptide reads, in one-letter code: Ferric nitrobindin-like protein (191 aa).

The short motif at 20–26 (GDWAGAG) is the GXWXGXG element.

The protein belongs to the nitrobindin family.

The chain is Ferric nitrobindin-like protein from Streptomyces coelicolor (strain ATCC BAA-471 / A3(2) / M145).